Here is a 252-residue protein sequence, read N- to C-terminus: MSRKPIIAGNWKMNKNPQEAKAFVEAVASKLPSTDLVDVAVAAPAVDLVTTIESAKDSVLKVAAQNCYFENTGAFTGETSPKVLAEMGADYVVIGHSERRDYFHETDEDINKKAKAIFANGLTPIVCCGESLETYEAGKAVEFVGAQVSAALAGLSAEQVASLVLAYEPIWAIGTGKSATQDDAQNMCKAVRDVVAADFGQEVADKVRVQYGGSVKPENVKDYMACPDVDGALVGGASLEADSFLALLDFLN.

N10 to K12 contributes to the substrate binding site. The Electrophile role is filled by H96. Catalysis depends on E168, which acts as the Proton acceptor. Residues G174, S214, and G235–G236 each bind substrate.

Belongs to the triosephosphate isomerase family. In terms of assembly, homodimer.

Its subcellular location is the cytoplasm. The enzyme catalyses D-glyceraldehyde 3-phosphate = dihydroxyacetone phosphate. It participates in carbohydrate biosynthesis; gluconeogenesis. It functions in the pathway carbohydrate degradation; glycolysis; D-glyceraldehyde 3-phosphate from glycerone phosphate: step 1/1. Involved in the gluconeogenesis. Catalyzes stereospecifically the conversion of dihydroxyacetone phosphate (DHAP) to D-glyceraldehyde-3-phosphate (G3P). The sequence is that of Triosephosphate isomerase from Streptococcus pyogenes serotype M2 (strain MGAS10270).